The following is a 274-amino-acid chain: NADPH-dependent 7-cyano-7-deazaguanine reductase (274 aa).

80–82 (VES) contacts substrate. An NADPH-binding site is contributed by 82–83 (SK). Residue C181 is the Thioimide intermediate of the active site. The active-site Proton donor is D188. 220–221 (HE) contacts substrate. 249–250 (RG) lines the NADPH pocket.

This sequence belongs to the GTP cyclohydrolase I family. QueF type 2 subfamily. As to quaternary structure, homodimer.

The protein localises to the cytoplasm. It catalyses the reaction 7-aminomethyl-7-carbaguanine + 2 NADP(+) = 7-cyano-7-deazaguanine + 2 NADPH + 3 H(+). The protein operates within tRNA modification; tRNA-queuosine biosynthesis. Its function is as follows. Catalyzes the NADPH-dependent reduction of 7-cyano-7-deazaguanine (preQ0) to 7-aminomethyl-7-deazaguanine (preQ1). This chain is NADPH-dependent 7-cyano-7-deazaguanine reductase, found in Burkholderia ambifaria (strain MC40-6).